The chain runs to 273 residues: 4-hydroxy-tetrahydrodipicolinate reductase (273 aa).

Residues 11-16 (GALGRM), 102-104 (GTT), and 126-129 (SPNF) contribute to the NAD(+) site. Histidine 159 (proton donor/acceptor) is an active-site residue. Residue histidine 160 participates in (S)-2,3,4,5-tetrahydrodipicolinate binding. Lysine 163 acts as the Proton donor in catalysis. 169 to 170 (GT) contributes to the (S)-2,3,4,5-tetrahydrodipicolinate binding site.

This sequence belongs to the DapB family. In terms of assembly, homotetramer.

Its subcellular location is the cytoplasm. It carries out the reaction (S)-2,3,4,5-tetrahydrodipicolinate + NAD(+) + H2O = (2S,4S)-4-hydroxy-2,3,4,5-tetrahydrodipicolinate + NADH + H(+). It catalyses the reaction (S)-2,3,4,5-tetrahydrodipicolinate + NADP(+) + H2O = (2S,4S)-4-hydroxy-2,3,4,5-tetrahydrodipicolinate + NADPH + H(+). Its pathway is amino-acid biosynthesis; L-lysine biosynthesis via DAP pathway; (S)-tetrahydrodipicolinate from L-aspartate: step 4/4. In terms of biological role, catalyzes the conversion of 4-hydroxy-tetrahydrodipicolinate (HTPA) to tetrahydrodipicolinate. In Buchnera aphidicola subsp. Cinara cedri (strain Cc), this protein is 4-hydroxy-tetrahydrodipicolinate reductase.